A 532-amino-acid chain; its full sequence is Light-independent protochlorophyllide reductase subunit B (532 aa).

Asp36 provides a ligand contact to [4Fe-4S] cluster. The Proton donor role is filled by Asp318. Substrate is bound at residue 453–454 (GM).

It belongs to the ChlB/BchB/BchZ family. As to quaternary structure, protochlorophyllide reductase is composed of three subunits; ChlL, ChlN and ChlB. Forms a heterotetramer of two ChlB and two ChlN subunits. [4Fe-4S] cluster serves as cofactor.

The protein localises to the plastid. It localises to the chloroplast. It carries out the reaction chlorophyllide a + oxidized 2[4Fe-4S]-[ferredoxin] + 2 ADP + 2 phosphate = protochlorophyllide a + reduced 2[4Fe-4S]-[ferredoxin] + 2 ATP + 2 H2O. It functions in the pathway porphyrin-containing compound metabolism; chlorophyll biosynthesis (light-independent). Component of the dark-operative protochlorophyllide reductase (DPOR) that uses Mg-ATP and reduced ferredoxin to reduce ring D of protochlorophyllide (Pchlide) to form chlorophyllide a (Chlide). This reaction is light-independent. The NB-protein (ChlN-ChlB) is the catalytic component of the complex. The polypeptide is Light-independent protochlorophyllide reductase subunit B (Tetradesmus obliquus (Green alga)).